The sequence spans 308 residues: Alpha/beta hydrolase domain-containing protein WAV2 (308 aa).

The helical transmembrane segment at 6–26 (SALFYGFGGIVVAGVALLVAF) threads the bilayer. Residues Ser-159, Asp-243, and Arg-308 each act as charge relay system in the active site.

It belongs to the serine esterase family. Expressed in roots, rosette leaves, stems and flowers.

It is found in the cell membrane. Its function is as follows. Involved in the regulation of root growth. Involved in the suppression of the root bending in response to touch stimuli, gravity and light. Negatively regulates stimulus-induced root bending through inhibition of root tip rotation. The sequence is that of Alpha/beta hydrolase domain-containing protein WAV2 from Arabidopsis thaliana (Mouse-ear cress).